Here is a 393-residue protein sequence, read N- to C-terminus: Formate-dependent phosphoribosylglycinamide formyltransferase (393 aa).

N(1)-(5-phospho-beta-D-ribosyl)glycinamide-binding positions include 22–23 and Glu82; that span reads EL. ATP is bound by residues Arg114, Lys155, 160 to 165, 195 to 198, and Glu203; these read SSGKGQ and EGFI. The ATP-grasp domain maps to 119–308; the sequence is RLAAEELDLP…QFALHARAIL (190 aa). The Mg(2+) site is built by Glu267 and Glu279. N(1)-(5-phospho-beta-D-ribosyl)glycinamide contacts are provided by residues Asp286, Lys356, and 363–364; that span reads RR.

Belongs to the PurK/PurT family. Homodimer.

The catalysed reaction is N(1)-(5-phospho-beta-D-ribosyl)glycinamide + formate + ATP = N(2)-formyl-N(1)-(5-phospho-beta-D-ribosyl)glycinamide + ADP + phosphate + H(+). Its pathway is purine metabolism; IMP biosynthesis via de novo pathway; N(2)-formyl-N(1)-(5-phospho-D-ribosyl)glycinamide from N(1)-(5-phospho-D-ribosyl)glycinamide (formate route): step 1/1. Involved in the de novo purine biosynthesis. Catalyzes the transfer of formate to 5-phospho-ribosyl-glycinamide (GAR), producing 5-phospho-ribosyl-N-formylglycinamide (FGAR). Formate is provided by PurU via hydrolysis of 10-formyl-tetrahydrofolate. The sequence is that of Formate-dependent phosphoribosylglycinamide formyltransferase from Pseudomonas putida (strain ATCC 47054 / DSM 6125 / CFBP 8728 / NCIMB 11950 / KT2440).